The primary structure comprises 1597 residues: THO complex subunit 2 (1597 aa).

2 disordered regions span residues 1250–1274 and 1384–1597; these read KSQR…SKDR and EPYP…RYQR. Over residues 1419–1430 the composition is skewed to polar residues; the sequence is GSSNYRGPSNDR. Composition is skewed to basic and acidic residues over residues 1458 to 1490, 1500 to 1512, 1522 to 1545, and 1554 to 1567; these read TYND…EYKK, FPEK…KDSS, YKRD…ETIR, and RNTR…RANE. The segment covering 1568-1582 has biased composition (polar residues); it reads NQRYNGNRKSNTQAL.

This sequence belongs to the THOC2 family. In terms of assembly, component of the THO complex, which is composed of HPR1, MFT1, THO2 and THP2. Together with SUB2, TEX1 and YRA1, THO forms the transcription/export (TREX) complex. THO associates with DNA and RNA in vitro.

It localises to the nucleus. Its function is as follows. Component the THO subcomplex of the TREX complex, which operates in coupling transcription elongation to mRNA export. The THO complex is recruited to transcribed genes and moves along the gene with the elongating polymerase during transcription. THO is important for stabilizing nascent RNA in the RNA polymerase II elongation complex by preventing formation of DNA:RNA hybrids behind the elongating polymerase. It functions in cotranscriptional formation of an export-competent messenger ribonucleoprotein particle (mRNP) by facilitating the loading of ATP-dependent RNA helicase SUB2 and the mRNA export factor YRA1 along the nascent mRNA. The sequence is that of THO complex subunit 2 (THO2) from Saccharomyces cerevisiae (strain ATCC 204508 / S288c) (Baker's yeast).